The sequence spans 190 residues: Peptidyl-tRNA hydrolase (190 aa).

Tyr-19 contributes to the tRNA binding site. His-24 functions as the Proton acceptor in the catalytic mechanism. TRNA is bound by residues Tyr-72, Asn-74, and Asn-121.

It belongs to the PTH family.

It localises to the mitochondrion. It carries out the reaction an N-acyl-L-alpha-aminoacyl-tRNA + H2O = an N-acyl-L-amino acid + a tRNA + H(+). Peptidyl-tRNA hydrolase involved in the recycling of tRNA-Lys from diacetyl-lysyl-tRNA-Lys and is important for mitochondrial function. This is Peptidyl-tRNA hydrolase (PTH1) from Saccharomyces cerevisiae (strain ATCC 204508 / S288c) (Baker's yeast).